A 32-amino-acid polypeptide reads, in one-letter code: Zinc metalloproteinase carinactivase-1 catalytic subunit (32 aa).

Residues 10 to 32 (FIKLVIVVDHSMVXKXNNDLIAI) form the Peptidase M12B domain.

It belongs to the venom metalloproteinase (M12B) family. P-III subfamily. P-IIId sub-subfamily. In terms of assembly, heterodimer of a metalloproteinase subunit and a regulatory subunit comprising two disulfide-linked lectins (14 kDa and 17 kDa chains) (AC Q9PRP7 and AC Q9PRP8). The cofactor is Zn(2+). Expressed by the venom gland.

The protein localises to the secreted. Calcium-dependent prothrombin (F2) activator. This protein may activate prothrombin via recognition by the regulatory subunit of the calcium ion bound conformation of its gamma-carboxyglutamic acid (GLA) domain, and the subsequent conversion of prothrombin to active thrombin is catalyzed by the catalytic subunit. This Echis carinatus (Saw-scaled viper) protein is Zinc metalloproteinase carinactivase-1 catalytic subunit.